Consider the following 468-residue polypeptide: ATP synthase subunit beta (468 aa).

155-162 is a binding site for ATP; it reads GGAGVGKT.

This sequence belongs to the ATPase alpha/beta chains family. F-type ATPases have 2 components, CF(1) - the catalytic core - and CF(0) - the membrane proton channel. CF(1) has five subunits: alpha(3), beta(3), gamma(1), delta(1), epsilon(1). CF(0) has three main subunits: a(1), b(2) and c(9-12). The alpha and beta chains form an alternating ring which encloses part of the gamma chain. CF(1) is attached to CF(0) by a central stalk formed by the gamma and epsilon chains, while a peripheral stalk is formed by the delta and b chains.

Its subcellular location is the cell membrane. It catalyses the reaction ATP + H2O + 4 H(+)(in) = ADP + phosphate + 5 H(+)(out). Its function is as follows. Produces ATP from ADP in the presence of a proton gradient across the membrane. The catalytic sites are hosted primarily by the beta subunits. This Streptococcus pyogenes serotype M49 (strain NZ131) protein is ATP synthase subunit beta.